Consider the following 209-residue polypeptide: Flavin prenyltransferase UbiX (209 aa).

Residues 13 to 15 (GAS), serine 39, 104 to 107 (STGT), cysteine 116, and arginine 139 contribute to the FMN site. Residues tyrosine 169 and arginine 185 each contribute to the dimethylallyl phosphate site.

This sequence belongs to the UbiX/PAD1 family.

It carries out the reaction dimethylallyl phosphate + FMNH2 = prenylated FMNH2 + phosphate. Functionally, flavin prenyltransferase that catalyzes the synthesis of the prenylated FMN cofactor (prenyl-FMN) for 4-hydroxy-3-polyprenylbenzoic acid decarboxylase UbiD. The prenyltransferase is metal-independent and links a dimethylallyl moiety from dimethylallyl monophosphate (DMAP) to the flavin N5 and C6 atoms of FMN. The polypeptide is Flavin prenyltransferase UbiX (Pseudomonas aeruginosa (strain ATCC 15692 / DSM 22644 / CIP 104116 / JCM 14847 / LMG 12228 / 1C / PRS 101 / PAO1)).